A 329-amino-acid polypeptide reads, in one-letter code: GTP 3',8-cyclase (329 aa).

Residues 8–234 form the Radical SAM core domain; that stretch reads AFARKFYYLR…QLRQRSDGPA (227 aa). Arg-17 contacts GTP. Residues Cys-24 and Cys-28 each contribute to the [4Fe-4S] cluster site. An S-adenosyl-L-methionine-binding site is contributed by Tyr-30. Cys-31 contacts [4Fe-4S] cluster. Arg-68 serves as a coordination point for GTP. Gly-72 is an S-adenosyl-L-methionine binding site. Residue Thr-99 coordinates GTP. Residue Ser-123 participates in S-adenosyl-L-methionine binding. Lys-160 is a GTP binding site. Met-194 contacts S-adenosyl-L-methionine. [4Fe-4S] cluster is bound by residues Cys-257 and Cys-260. 262 to 264 lines the GTP pocket; it reads RLR. Cys-274 contributes to the [4Fe-4S] cluster binding site.

Belongs to the radical SAM superfamily. MoaA family. In terms of assembly, monomer and homodimer. [4Fe-4S] cluster is required as a cofactor.

It catalyses the reaction GTP + AH2 + S-adenosyl-L-methionine = (8S)-3',8-cyclo-7,8-dihydroguanosine 5'-triphosphate + 5'-deoxyadenosine + L-methionine + A + H(+). It functions in the pathway cofactor biosynthesis; molybdopterin biosynthesis. In terms of biological role, catalyzes the cyclization of GTP to (8S)-3',8-cyclo-7,8-dihydroguanosine 5'-triphosphate. The sequence is that of GTP 3',8-cyclase from Escherichia coli O139:H28 (strain E24377A / ETEC).